Consider the following 1048-residue polypeptide: Nonsense-mediated mRNA decay protein 5 (1048 aa).

The Importin N-terminal domain maps to 24-104 (AETHLKNASK…KDMLIKTMVS (81 aa)). The residue at position 977 (S977) is a Phosphoserine.

In terms of assembly, GTP-bound Ran dissociates the isolated NMD5/TFIIS complex.

It localises to the nucleus. Its subcellular location is the cytoplasm. In terms of biological role, active in protein import into the nucleus. Its major import substrate is transcription elongation factor TFIIS. This Saccharomyces cerevisiae (strain ATCC 204508 / S288c) (Baker's yeast) protein is Nonsense-mediated mRNA decay protein 5 (NMD5).